Consider the following 442-residue polypeptide: G-protein coupled receptor family C group 5 member C (442 aa).

The N-terminal stretch at 1–23 (MAIHRTVLMCLGLPLFLLPGARA) is a signal peptide. At 24 to 50 (QEQAPPGCSPDLNPLYYNLCDRSEAWG) the chain is on the extracellular side. The chain crosses the membrane as a helical span at residues 51–71 (IILEAVAGAGVVTTFVLTIIL). The Cytoplasmic portion of the chain corresponds to 72-85 (VASLPFVQDTKKRS). A helical transmembrane segment spans residues 86–106 (LLGTQVFFLLGTLGLFCLVFA). The Extracellular portion of the chain corresponds to 107-120 (CVVKPSFSTCASRR). Residues 121-141 (FLFGVLFAICFSCLVAHVLAL) form a helical membrane-spanning segment. Over 142–155 (HFLVRKNHGPRGWV) the chain is Cytoplasmic. The chain crosses the membrane as a helical span at residues 156-176 (IFLVALLLSLVEVIINTEWLI). At 177 to 209 (ITLVRGAGTEGDALGNGSAGWVAVSPCAIANAD) the chain is on the extracellular side. N-linked (GlcNAc...) asparagine glycosylation occurs at N192. The chain crosses the membrane as a helical span at residues 210-230 (FVMALIYVMLLLLCAFSGAWS). Residues 231–242 (ALCGRFKRWRKH) lie on the Cytoplasmic side of the membrane. A helical transmembrane segment spans residues 243-263 (GVFILLTTTASIAVWVVWIVM). Residues 264-280 (YTYGNRQHNSPTWDDPT) are Extracellular-facing. Residues 281–301 (LAIALATNAWAFVLFYVIPEV) traverse the membrane as a helical segment. Residues 302–442 (SQVTRSSPEQ…QVFRNPYVWD (141 aa)) are Cytoplasmic-facing. Phosphoserine occurs at positions 345, 384, 404, and 407. Y415 bears the Phosphotyrosine mark. The residue at position 424 (T424) is a Phosphothreonine.

Belongs to the G-protein coupled receptor 3 family.

Its subcellular location is the cell membrane. In terms of biological role, this retinoic acid-inducible G-protein coupled receptor provide evidence for a possible interaction between retinoid and G-protein signaling pathways. This Bos taurus (Bovine) protein is G-protein coupled receptor family C group 5 member C (GPRC5C).